The chain runs to 495 residues: MHNQTVRATVFKANAAAPQTKQIYEDDFSELYGEDIIAPPYNIIELKTIAEYSTILQQCIDAYRVNITGFGFDVEYTFDVNASDVDQAKKKRAEKDWARLEAFYKCLHFDESAEMILGYAIEDREKTGNGFMEVLRDGAGKPAGIEYLDVKYMRVCGAGEPVEVSFVYEENGKMKRIKRQKRFRKYVQMINGKKVFFKEYGDPRKMDIRTGEYVNTLAEKYQANEAIHLKIGSGVYGVPRWIGNIVNLYGARKAEELNFMYFKQGRHVPAAITVENGMLSEASYRELQEYMNDLEGVENAHKFLLIEAEGIAKEKDLHGGEDITPVSVEIKSLAEILQNDALFLEYDEKSRNKLRSAFRLPPLYTGEAQEYNRATADTARKITEEQVFQPERKTLVNKLNTLLLPELNIHDVRLTLKGPDFRDPLEIAKVLGPFITAGAVSPNDLRDLAGRVLGKTLEEWPEDIYKRPAGQDAEKTNLAALMQELKESIEDIKTS.

The protein belongs to the phage portal family. PBSX subfamily.

The protein is Phage-like element PBSX protein XkdE (xkdE) of Bacillus subtilis (strain 168).